Here is a 432-residue protein sequence, read N- to C-terminus: MGDLILDPYMEDAILDHSCLAELLADQTALPLFHPYSGGATPQMVDTDTFLRAIGALPPLAPPPAAPLAPAPPDSPRTPHTYGSLLPVYGDLPPLSGAVLQEPLPLPEGSDHPVSPKKTIEVASLLQERADQPVVTSNSATTTRPQLCAPYDDDIEATLRAMETNPVERPSPYFLETTQGGRMTALLRLVAATTVFLAAKYEDQYTLRKIDASMVAARCGYTSETRHKMVSCMETEILAALDYNLGGPTAYTFVEHFTRYYGKGKEEKLMREAAHWFADGSLLTYGFHRYLPSMVAASAIFLARLHVRGHEPWRKDLAELTGFWYSDVSTYGPTADTFVEHFTRYKCTTAGERKSYGCMQRLERDVADQSLMNYVRLPGATIPAVHGGGGRRASISVARCSLNRHDALVWSTELQELTGYSFEDLVSCIFAM.

This sequence belongs to the cyclin family. Cyclin F subfamily.

In Oryza sativa subsp. japonica (Rice), this protein is Putative cyclin-F1-4 (CycF1-4).